The primary structure comprises 476 residues: MHTVEKIGGTSMSRFEEVLDNIFIGRREGAALYQRIFVVSAYSGMTNLLLEHKKTGEPGVYQRFADAQSEGAWREALEGVRQRMLAKNAELFSSEYELHAANQFINSRIDDASECMHSLQKLCAYGHFQLSEHLMKVREMLASLGEAHSAFNSVLALKQRGVNARLADLTGWQQEAPLPFEEMISSHFAGFDFSRELVVATGYTHCAEGLMNTFDRGYSEITFAQIAAATGAREAIIHKEFHLSSADPNLVGADKVVTIGRTNYDVADQLSNLGMEAIHPRAAKTLRRAGVELRIKNAFEPEHGGTLISQDYKSEKPCVEIIAGRKDVFGIEVFDQDMLGDIGYDMEISKLLKQLKLYVVNKDSDANSITYYASGSRKLINRAARLIEEQYPAAEVTVHNLAIVSAIGSDLKVKGILAKTVAALAEAGISIQAIHQSIRQVEMQCVVNEEDYDAAIAALHRALIEPENHGDVIAAA.

One can recognise an ACT domain in the interval 405–476 (SAIGSDLKVK…ENHGDVIAAA (72 aa)).

This sequence belongs to the aspartokinase family. Monomer.

The protein resides in the cytoplasm. It carries out the reaction L-aspartate + ATP = 4-phospho-L-aspartate + ADP. The protein operates within amine and polyamine biosynthesis; ectoine biosynthesis. With respect to regulation, allosterically and strongly feedback inhibited by tryptophan. The presence of either 650 mM NaCl or KCl reduces the inhibition by tryptophan. In terms of biological role, involved in the biosynthesis of L-aspartate-beta-semialdehyde, which is an intermediate in the biosynthesis of ectoine, a highly soluble organic osmolyte, called compatible solute. Ectoine is used to avoid excessive water efflux, plasmolysis, molecular crowding of the cytoplasm, and cessation of growth in high salinity environments. Catalyzes the phosphorylation of the beta-carboxyl group of L-aspartate to yield 4-phospho-L-aspartate. This is Aspartate kinase Ask_Ect (ask) from Stutzerimonas stutzeri (strain A1501) (Pseudomonas stutzeri).